A 372-amino-acid chain; its full sequence is Segmentation polarity homeobox protein engrailed (372 aa).

Disordered regions lie at residues 1–35 (MAFE…YSPQ), 47–112 (YERG…LQPT), 196–246 (ERLS…QSNP), and 261–286 (DRPS…PRTA). Basic and acidic residues-rich tracts occupy residues 79 to 105 (DYYR…DRSR) and 197 to 215 (RLSR…KRPD). Residues 216 to 244 (SASSIVSSTSSGAVSTCGSSDASSIQSQS) show a composition bias toward low complexity. Residues 280–339 (EKRPRTAFSGAQLARLKHEFAENRYLTERRRQSLAAELGLAEAQIKIWFQNKRAKIKKAS) constitute a DNA-binding region (homeobox).

The protein belongs to the engrailed homeobox family. Expressed in the middle silk gland but not in the posterior silk gland during the fourth molt/fifth intermolt period.

Its subcellular location is the nucleus. Its function is as follows. This protein might be involved in the compartmentalization of the silk gland. The chain is Segmentation polarity homeobox protein engrailed (en) from Bombyx mori (Silk moth).